The primary structure comprises 680 residues: DNA-directed RNA polymerase subunit beta' (680 aa).

Residues Cys-69, Cys-71, Cys-87, and Cys-90 each coordinate Zn(2+). Positions 489, 491, and 493 each coordinate Mg(2+).

This sequence belongs to the RNA polymerase beta' chain family. RpoC1 subfamily. In plastids the minimal PEP RNA polymerase catalytic core is composed of four subunits: alpha, beta, beta', and beta''. When a (nuclear-encoded) sigma factor is associated with the core the holoenzyme is formed, which can initiate transcription. Requires Mg(2+) as cofactor. Zn(2+) is required as a cofactor.

It localises to the plastid. Its subcellular location is the chloroplast. It carries out the reaction RNA(n) + a ribonucleoside 5'-triphosphate = RNA(n+1) + diphosphate. DNA-dependent RNA polymerase catalyzes the transcription of DNA into RNA using the four ribonucleoside triphosphates as substrates. The chain is DNA-directed RNA polymerase subunit beta' from Amborella trichopoda.